A 561-amino-acid polypeptide reads, in one-letter code: Putative ABC transporter ATP-binding protein SAV_5847 (561 aa).

An ABC transporter 1 domain is found at Ile-2 to Leu-243. Gly-36 to Ser-43 contacts ATP. The segment at Glu-268–Arg-299 is disordered. The span at Ala-272–Pro-288 shows a compositional bias: low complexity. The region spanning Ala-315–Lys-543 is the ABC transporter 2 domain. Gly-347–Ser-354 provides a ligand contact to ATP.

It belongs to the ABC transporter superfamily.

The protein resides in the cell membrane. Probably part of an ABC transporter complex. Responsible for energy coupling to the transport system. The chain is Putative ABC transporter ATP-binding protein SAV_5847 from Streptomyces avermitilis (strain ATCC 31267 / DSM 46492 / JCM 5070 / NBRC 14893 / NCIMB 12804 / NRRL 8165 / MA-4680).